The chain runs to 666 residues: ATP-dependent RNA helicase DDX51 (666 aa).

A2 bears the N-acetylalanine mark. The interval 9-152 (YPGPDAAAAA…AAPDGPALEE (144 aa)) is disordered. Low complexity predominate over residues 10–28 (PGPDAAAAAGPEGAEAGAH). Basic and acidic residues predominate over residues 33–48 (ALLERLQSRARERQQQ). Over residues 49-58 (REPAQTEAAA) the composition is skewed to low complexity. Residues 65–75 (RRRRRPRRRRR) show a composition bias toward basic residues. A phosphoserine mark is found at S83 and S103. Over residues 97–108 (EDAGAESNEEAP) the composition is skewed to acidic residues. The short motif at 221–229 (YFPVQAAVI) is the Q motif element. The region spanning 243–452 (GRGGYRPSDL…QLGLHQPRLF (210 aa)) is the Helicase ATP-binding domain. 256–263 (APTGSGKT) provides a ligand contact to ATP. A DEAD box motif is present at residues 371–374 (DEAD). Residues 494-640 (VVLHLVLEMG…RHELSSKLLQ (147 aa)) form the Helicase C-terminal domain.

It belongs to the DEAD box helicase family. DDX51/DBP6 subfamily.

It localises to the nucleus. The protein localises to the nucleolus. The catalysed reaction is ATP + H2O = ADP + phosphate + H(+). In terms of biological role, ATP-binding RNA helicase involved in the biogenesis of 60S ribosomal subunits. The chain is ATP-dependent RNA helicase DDX51 (DDX51) from Homo sapiens (Human).